Consider the following 623-residue polypeptide: Adenine deaminase 2 (623 aa).

This sequence belongs to the metallo-dependent hydrolases superfamily. Adenine deaminase family. Mn(2+) is required as a cofactor.

The enzyme catalyses adenine + H2O + H(+) = hypoxanthine + NH4(+). This is Adenine deaminase 2 from Jannaschia sp. (strain CCS1).